We begin with the raw amino-acid sequence, 491 residues long: Cadherin-3 (491 aa).

Cadherin domains follow at residues 1–102 (ENTV…PPVF), 103–208 (VPPS…DHGP), and 209–314 (VPEP…DPWT). The Extracellular portion of the chain corresponds to 1 to 316 (ENTVSHEVQR…VTCRDPWTWG (316 aa)). Asn228 carries an N-linked (GlcNAc...) asparagine glycan. Residues 317–339 (FLLPILGAALALLLLLLVLLFLV) form a helical membrane-spanning segment. Topologically, residues 340-491 (RKKRKIKEPL…ADMYGGGQDD (152 aa)) are cytoplasmic.

In terms of assembly, interacts with CDCP1 and CTNNB1.

It localises to the cell membrane. Its function is as follows. Cadherins are calcium-dependent cell adhesion proteins. They preferentially interact with themselves in a homophilic manner in connecting cells; cadherins may thus contribute to the sorting of heterogeneous cell types. The protein is Cadherin-3 (CDH3) of Bos taurus (Bovine).